The following is a 699-amino-acid chain: SPS-sensor serine protease component SSY5 (699 aa).

2 disordered regions span residues methionine 1–phenylalanine 113 and valine 129–arginine 158. A propeptide spanning residues methionine 1–alanine 381 is cleaved from the precursor. Residues asparagine 8–threonine 18 show a composition bias toward basic and acidic residues. Over residues asparagine 24–glycine 38 the composition is skewed to polar residues. Positions asparagine 39–asparagine 51 are enriched in basic and acidic residues. A compositionally biased stretch (low complexity) spans serine 61 to arginine 78. The segment covering threonine 83–glutamate 93 has biased composition (polar residues). The span at serine 144–serine 154 shows a compositional bias: low complexity. A serine protease region spans residues phenylalanine 459–glycine 699. Residues histidine 465, aspartate 545, and serine 640 each act as charge relay system in the active site.

This sequence belongs to the peptidase S64 family. Component of the plasma membrane SPS (SSY1-PTR3-SSY5) amino acid sensor complex. Post-translationally, the propeptide is autoproteolytically cleaved from the catalytic domain but remains associated, forming an inactive protease complex. This processing occurs even in the absence of signaling.

It is found in the cell membrane. Its function is as follows. Protease component of the SPS-sensor system, which regulates the expression of several amino acid-metabolizing enzymes and amino acid- and peptide-permeases in response to extracellular amino acid levels by controlling the activity of two transcription factors, STP1 and STP2. Catalyzes the activation of these transcription factors, which are synthesized as latent cytoplasmic precursors, by proteolytic removal of an N-terminal inhibitory domain containing cytoplasmic retention motifs. SSY5 binds as an inactive protease complex to STP1. In response to extracellular amino acids and dependent on the other SPS-sensor components, the inhibitory propeptide is induced to dissociate, and thereby enables the catalytic domain to process STP1. This chain is SPS-sensor serine protease component SSY5 (SSY5), found in Saccharomyces cerevisiae (strain AWRI1631) (Baker's yeast).